A 138-amino-acid polypeptide reads, in one-letter code: Large ribosomal subunit protein bL17 (138 aa).

This sequence belongs to the bacterial ribosomal protein bL17 family. Part of the 50S ribosomal subunit. Contacts protein L32.

The sequence is that of Large ribosomal subunit protein bL17 from Bradyrhizobium diazoefficiens (strain JCM 10833 / BCRC 13528 / IAM 13628 / NBRC 14792 / USDA 110).